A 278-amino-acid polypeptide reads, in one-letter code: Non-heme chloroperoxidase (278 aa).

Positions 26–264 constitute an AB hydrolase-1 domain; sequence PVVLIHGFPL…GAPHGLLWTH (239 aa). Active-site residues include Ser99, Asp229, and His258.

Belongs to the AB hydrolase superfamily. Bacterial non-heme haloperoxidase / perhydrolase family. As to quaternary structure, homodimer.

In Kitasatospora aureofaciens (Streptomyces aureofaciens), this protein is Non-heme chloroperoxidase (cpo).